Reading from the N-terminus, the 460-residue chain is MRITNTLTGKKEEFVPIQPGVVRMYVCGPTVYDLIHVGNARPALVFDVFRRYLEYRGYRVIMVQNFTDIDDKIINKANQLGVDYKTVADTFIAEYWRDAHALGIRPANFHPRTTDFVEDIVEIIEKLVEKGFAYQTETGVYFDVRKFEKYGELSKKKIEDLIAGARVEVDETKKSPLDFSLWKKAKPGEPCWKSPWGEGRPGWHIECTVMSVKILGESFDIHAGGEDLVFPHHENEKAQAEALTGKVFARYWMHNGMVRFLGDKMSKSTGNIFTVREAVKRYGRDGLRYMILSKHYRSPMDFSEELLQDYSRAVKRVWEILGRYEKSGDIGIPKRNAVYEEYVNRFVEALDDDFNTPVAVSLIFELARNLSKAMDDNDREDALLYYHLIRREFGPVLGLFDLNEEKKEVSSEELLKLLIEVRDVLRKEKRYDLSDRIRDRLREIGIILKDTPSGTEYTVE.

Cysteine 27 serves as a coordination point for Zn(2+). A 'HIGH' region motif is present at residues proline 29–asparagine 39. Positions 207, 232, and 236 each coordinate Zn(2+). The 'KMSKS' region motif lies at lysine 264–serine 268. Residue lysine 267 coordinates ATP.

This sequence belongs to the class-I aminoacyl-tRNA synthetase family. In terms of assembly, monomer. It depends on Zn(2+) as a cofactor.

The protein resides in the cytoplasm. It carries out the reaction tRNA(Cys) + L-cysteine + ATP = L-cysteinyl-tRNA(Cys) + AMP + diphosphate. The protein is Cysteine--tRNA ligase (cysS) of Thermotoga maritima (strain ATCC 43589 / DSM 3109 / JCM 10099 / NBRC 100826 / MSB8).